The chain runs to 412 residues: Serine hydroxymethyltransferase 1 (412 aa).

Residues L116 and 120–122 (GHL) each bind (6S)-5,6,7,8-tetrahydrofolate. Residue K225 is modified to N6-(pyridoxal phosphate)lysine.

The protein belongs to the SHMT family. In terms of assembly, homodimer. Pyridoxal 5'-phosphate is required as a cofactor.

It localises to the cytoplasm. The catalysed reaction is (6R)-5,10-methylene-5,6,7,8-tetrahydrofolate + glycine + H2O = (6S)-5,6,7,8-tetrahydrofolate + L-serine. It functions in the pathway one-carbon metabolism; tetrahydrofolate interconversion. Its pathway is amino-acid biosynthesis; glycine biosynthesis; glycine from L-serine: step 1/1. Catalyzes the reversible interconversion of serine and glycine with tetrahydrofolate (THF) serving as the one-carbon carrier. This reaction serves as the major source of one-carbon groups required for the biosynthesis of purines, thymidylate, methionine, and other important biomolecules. Also exhibits THF-independent aldolase activity toward beta-hydroxyamino acids, producing glycine and aldehydes, via a retro-aldol mechanism. The protein is Serine hydroxymethyltransferase 1 of Pseudomonas fluorescens (strain Pf0-1).